The chain runs to 206 residues: Probable GTP-binding protein EngB (206 aa).

Residues 8 to 195 (RSDEVVLVGR…EDAVNSHFDA (188 aa)) enclose the EngB-type G domain. Residues 16-23 (GRSNVGKS), 41-45 (GVTRQ), 60-63 (DLPG), 140-143 (NKMD), and 175-177 (ITA) contribute to the GTP site. Mg(2+)-binding residues include Ser23 and Thr43.

This sequence belongs to the TRAFAC class TrmE-Era-EngA-EngB-Septin-like GTPase superfamily. EngB GTPase family. It depends on Mg(2+) as a cofactor.

In terms of biological role, necessary for normal cell division and for the maintenance of normal septation. This chain is Probable GTP-binding protein EngB, found in Halobacterium salinarum (strain ATCC 29341 / DSM 671 / R1).